The primary structure comprises 227 residues: MSINLDNEELKNEDLVANMRKDYRMGELKEEGLLESPFKMFDMWLTQEIELKNEGAEPNAFTLATCSIERKPSARVVLLKHFDHQGFVFYTNYNSRKSKELSENPFASMTFLWTQKQVRIEGSVEKVDRLESEKYFKSRPRSSQIGAWVSEFQSSEVTKQHLEEKTIEMENKFKDQEVPLPPFWGGWRIKPYAFEFWQGKSGRIHDRFKYVPTDSNNDNWITKRLSP.

Pyridoxal 5'-phosphate is bound at residue 20 to 23; the sequence is RKDY. 75–78 contacts FMN; that stretch reads RVVL. K80 contributes to the pyridoxal 5'-phosphate binding site. Residues 90–91, 96–97, and Q117 each bind FMN; these read YT and RK. Pyridoxal 5'-phosphate contacts are provided by Y135, R139, and S143. Residues 152–153 and W197 each bind FMN; that span reads FQ. Residue 203 to 205 participates in pyridoxal 5'-phosphate binding; the sequence is RIH. R207 serves as a coordination point for FMN.

Belongs to the pyridoxamine 5'-phosphate oxidase family. As to quaternary structure, homodimer. Requires FMN as cofactor.

The enzyme catalyses pyridoxamine 5'-phosphate + O2 + H2O = pyridoxal 5'-phosphate + H2O2 + NH4(+). It catalyses the reaction pyridoxine 5'-phosphate + O2 = pyridoxal 5'-phosphate + H2O2. It participates in cofactor metabolism; pyridoxal 5'-phosphate salvage; pyridoxal 5'-phosphate from pyridoxamine 5'-phosphate: step 1/1. It functions in the pathway cofactor metabolism; pyridoxal 5'-phosphate salvage; pyridoxal 5'-phosphate from pyridoxine 5'-phosphate: step 1/1. In terms of biological role, catalyzes the oxidation of either pyridoxine 5'-phosphate (PNP) or pyridoxamine 5'-phosphate (PMP) into pyridoxal 5'-phosphate (PLP). This Dictyostelium discoideum (Social amoeba) protein is Pyridoxine-5'-phosphate oxidase (pnpo).